A 134-amino-acid polypeptide reads, in one-letter code: Small ribosomal subunit protein uS8 (134 aa).

The protein belongs to the universal ribosomal protein uS8 family. Part of the 30S ribosomal subunit. Contacts proteins S5 and S12.

Functionally, one of the primary rRNA binding proteins, it binds directly to 16S rRNA central domain where it helps coordinate assembly of the platform of the 30S subunit. The polypeptide is Small ribosomal subunit protein uS8 (Thermotoga maritima (strain ATCC 43589 / DSM 3109 / JCM 10099 / NBRC 100826 / MSB8)).